The sequence spans 834 residues: Mannosyl-oligosaccharide glucosidase (834 aa).

The segment covering 1-10 (MARGERRRRA) has biased composition (basic residues). The tract at residues 1 to 37 (MARGERRRRAAAAEGARPLERARAAGRRDGRAGGARG) is disordered. The Cytoplasmic segment spans residues 1-43 (MARGERRRRAAAAEGARPLERARAAGRRDGRAGGARGSASGAA). The Endoplasmic reticulum targeting signature appears at 3–9 (RGERRRR). Basic and acidic residues predominate over residues 17-31 (RPLERARAAGRRDGR). The chain crosses the membrane as a helical; Signal-anchor for type II membrane protein span at residues 44–64 (LAVVVLALAFGLSGRWVLAWL). The Lumenal portion of the chain corresponds to 65 to 834 (RVRRALTLHP…LVLLIMAEEY (770 aa)). Residues 74 to 136 (PAPSALPPDS…GTPPKLRHTC (63 aa)) form a required for endoplasmic reticulum targeting region. Residue D580 is the Proton donor of the active site. N-linked (GlcNAc...) asparagine glycosylation is present at N654. The Proton acceptor role is filled by E804.

Belongs to the glycosyl hydrolase 63 family.

Its subcellular location is the endoplasmic reticulum membrane. It catalyses the reaction N(4)-(alpha-D-Glc-(1-&gt;2)-alpha-D-Glc-(1-&gt;3)-alpha-D-Glc-(1-&gt;3)-alpha-D-Man-(1-&gt;2)-alpha-D-Man-(1-&gt;2)-alpha-D-Man-(1-&gt;3)-[alpha-D-Man-(1-&gt;2)-alpha-D-Man-(1-&gt;3)-[alpha-D-Man-(1-&gt;2)-alpha-D-Man-(1-&gt;6)]-alpha-D-Man-(1-&gt;6)]-beta-D-Man-(1-&gt;4)-beta-D-GlcNAc-(1-&gt;4)-beta-D-GlcNAc)-L-asparaginyl-[protein] + H2O = N(4)-(alpha-D-Glc-(1-&gt;3)-alpha-D-Glc-(1-&gt;3)-alpha-D-Man-(1-&gt;2)-alpha-D-Man-(1-&gt;2)-alpha-D-Man-(1-&gt;3)-[alpha-D-Man-(1-&gt;2)-alpha-D-Man-(1-&gt;3)-[alpha-D-Man-(1-&gt;2)-alpha-D-Man-(1-&gt;6)]-alpha-D-Man-(1-&gt;6)]-beta-D-Man-(1-&gt;4)-beta-D-GlcNAc-(1-&gt;4)-beta-D-GlcNAc)-L-asparaginyl-[protein] + beta-D-glucose. The protein operates within glycan metabolism; N-glycan degradation. Its activity is regulated as follows. Inhibited by the deoxynojirimycin derivative N-9'-Methoxynonyl-1-Deoxynojirimycin. Functionally, in the context of N-glycan degradation, cleaves the distal alpha 1,2-linked glucose residue from the Glc(3)Man(9)GlcNAc(2) oligosaccharide precursor in a highly specific manner. In terms of biological role, (Microbial infection) Required for successful influenza or dengue virus infection; inhibition of its activity by a deoxynojirimycin derivative prevents death in mice infected with lethal doses of influenza or dengue viruses, even when administrated after infection. This chain is Mannosyl-oligosaccharide glucosidase, found in Mus musculus (Mouse).